The primary structure comprises 386 residues: MSKIKTHSTGSKRTVPFYKLPPPVPLPPLPPPDPTRYFSTEKYIALSKDEKFKFDDYDVNDETLKKVVLNEIGKCPDIWSSRSQAAIMEHYPIVATETYRRTGLLLSIKSLKQIYKCGKDNLRNRLRVAIVSKRLTPAQVEAYMWRWEFYGFIRYYRDYTQRWEADLLKDLDVVLGLEARRASKNMEKVDSGELMEPMEPMDSTMDEMCVEEEPYEETGSNWSDPAPEPSQSKSQSPEAKYPQAYLLPEADEVYNPDDFYQEEHESASNAMYRIAFSQQYGGGGSPAVQKPVTFSAQPAPAPVREAPSPVVENVSSSSFTPKPPAMINNFGEEMNQITYQAIRIAREQPERLKLLRKALFDVVLAFDQKEYADVGDLYRDLAQKNS.

Positions 175–285 are sufficient for interaction with lin-35; that stretch reads LGLEARRASK…FSQQYGGGGS (111 aa). The interval 212–240 is disordered; that stretch reads EEPYEETGSNWSDPAPEPSQSKSQSPEAK. Positions 229–240 are enriched in low complexity; that stretch reads PSQSKSQSPEAK.

The protein belongs to the lin-8 family. As to quaternary structure, interacts with lin-35 (via C-terminus). As to expression, widely expressed throughout development, with particularly prominent expression in the germline and in neuronal nuclei of the head (at protein level).

Its subcellular location is the nucleus. In terms of biological role, acts as a synthetic multivulva class A (synMuvA) protein and redundantly inhibits lin-3/EGF expression to prevent inappropriate vulva induction. The protein is Protein lin-8 of Caenorhabditis elegans.